The chain runs to 451 residues: Alpha-galactosidase (451 aa).

5–71 lines the NAD(+) pocket; it reads PKITFIGAGS…ASGKITCHTQ (67 aa). Position 151 (Asn-151) interacts with substrate. Cys-173 serves as a coordination point for Mn(2+). His-174 serves as the catalytic Proton donor. Mn(2+) is bound at residue His-203. Residue Arg-287 participates in substrate binding.

The protein belongs to the glycosyl hydrolase 4 family. As to quaternary structure, homodimer. The cofactor is NAD(+). It depends on Mn(2+) as a cofactor.

It catalyses the reaction Hydrolysis of terminal, non-reducing alpha-D-galactose residues in alpha-D-galactosides, including galactose oligosaccharides, galactomannans and galactolipids.. The sequence is that of Alpha-galactosidase (melA) from Escherichia coli (strain K12).